We begin with the raw amino-acid sequence, 374 residues long: MAANKDYYDILGVSKDASDDEIKKAYRKLSKKYHPDINKAPDAEQKFKDVNEAYEVLGDSQKRAQYDQFGSADPNAGFGGGGFGGQGGFSDFGGGFEDIFGSFFGGGQRQSPNQPRQGEDLQYQMSLKFEEAIFGKKTTIKYSREALCKTCGGSGAKEGTSPVTCHKCNGTGTIQVTQNTPLGRMVRQQTCDVCNGTGKEIKEKCPTCGGTGHTSQQHEVKVSVPAGVEDGQQMRLQGQGEAGFNGGPYGDLYIIFQVQPSDMYERDGSEIYYNQTISFVQAALGDEIEVPTVHGKVKLKVPAGTQTGTNFRLKGKGAPRLRGNGTGDQHVKVKVTVPKKLNSGQKEALKQFAKASGEEPSGHGKSGFFDKFMN.

Positions 6-70 (DYYDILGVSK…QKRAQYDQFG (65 aa)) constitute a J domain. Residues 135-217 (GKKTTIKYSR…CGGTGHTSQQ (83 aa)) form a CR-type zinc finger. Residues cysteine 148, cysteine 151, cysteine 165, cysteine 168, cysteine 191, cysteine 194, cysteine 205, and cysteine 208 each contribute to the Zn(2+) site. 4 CXXCXGXG motif repeats span residues 148–155 (CKTCGGSG), 165–172 (CHKCNGTG), 191–198 (CDVCNGTG), and 205–212 (CPTCGGTG). Disordered stretches follow at residues 308 to 328 (GTNF…GTGD) and 347 to 374 (EALK…KFMN).

It belongs to the DnaJ family. In terms of assembly, homodimer. Zn(2+) serves as cofactor.

It is found in the cytoplasm. Functionally, participates actively in the response to hyperosmotic and heat shock by preventing the aggregation of stress-denatured proteins and by disaggregating proteins, also in an autonomous, DnaK-independent fashion. Unfolded proteins bind initially to DnaJ; upon interaction with the DnaJ-bound protein, DnaK hydrolyzes its bound ATP, resulting in the formation of a stable complex. GrpE releases ADP from DnaK; ATP binding to DnaK triggers the release of the substrate protein, thus completing the reaction cycle. Several rounds of ATP-dependent interactions between DnaJ, DnaK and GrpE are required for fully efficient folding. Also involved, together with DnaK and GrpE, in the DNA replication of plasmids through activation of initiation proteins. In Pediococcus pentosaceus (strain ATCC 25745 / CCUG 21536 / LMG 10740 / 183-1w), this protein is Chaperone protein DnaJ.